A 423-amino-acid polypeptide reads, in one-letter code: Type II methyltransferase M.BamHI (423 aa).

Residues 397-414 are compositionally biased toward basic and acidic residues; that stretch reads DFRQDHEGNSKGDKKNEN. Positions 397 to 423 are disordered; it reads DFRQDHEGNSKGDKKNENNDQISLSLE.

It belongs to the N(4)/N(6)-methyltransferase family.

The enzyme catalyses a 2'-deoxycytidine in DNA + S-adenosyl-L-methionine = an N(4)-methyl-2'-deoxycytidine in DNA + S-adenosyl-L-homocysteine + H(+). In terms of biological role, a beta subtype methylase, recognizes the double-stranded sequence 5'-GGATCC-3', methylates C-5 on both strands, and protects the DNA from cleavage by the BamHI endonuclease. In Bacillus amyloliquefaciens (Bacillus velezensis), this protein is Type II methyltransferase M.BamHI.